Here is a 177-residue protein sequence, read N- to C-terminus: Large ribosomal subunit protein uL6 (177 aa).

Belongs to the universal ribosomal protein uL6 family. Part of the 50S ribosomal subunit.

In terms of biological role, this protein binds to the 23S rRNA, and is important in its secondary structure. It is located near the subunit interface in the base of the L7/L12 stalk, and near the tRNA binding site of the peptidyltransferase center. In Rickettsia typhi (strain ATCC VR-144 / Wilmington), this protein is Large ribosomal subunit protein uL6.